The sequence spans 284 residues: MTTSTMQQLKHDGDFSDELNETSTIQFYNKVSQQRKRRKTRTTFSNCQLNELENNFNRQRYLTPTDRDRIAKHLGLTNTQVITWFQNRRAKLKREAEELERDVMALRKQKQQKFTCLSLSDHDHEETQIDDENEQGDNNNDDDGDDNDVEEDDGEEQEKNHTKYLTQPPSISNILPSSLKHFPSSTLNTLEIDNKHETLNMNLFINPFSNEKCLKRNKDLIRQQCYLFNHHINNYCTVNNDNNINNNNNNNNRKNSIDGMNKGRSIKKGNKIWCPALELEQEIH.

Residues 37–96 constitute a DNA-binding region (homeobox); sequence RRKTRTTFSNCQLNELENNFNRQRYLTPTDRDRIAKHLGLTNTQVITWFQNRRAKLKREA. The tract at residues 117-172 is disordered; it reads LSLSDHDHEETQIDDENEQGDNNNDDDGDDNDVEEDDGEEQEKNHTKYLTQPPSIS. A compositionally biased stretch (acidic residues) spans 128–156; the sequence is QIDDENEQGDNNNDDDGDDNDVEEDDGEE.

The protein resides in the nucleus. This is Homeobox protein SMOX-5 (SMOX-5) from Schistosoma mansoni (Blood fluke).